The following is a 376-amino-acid chain: Putative C-mannosyltransferase DPY19L2P2 (376 aa).

Residue asparagine 32 is glycosylated (N-linked (GlcNAc...) asparagine). Helical transmembrane passes span 52–72 (ACFYVGVIFILNGLMMGLFFI), 107–127 (LRESFSYPFLVLQMYVLTLIL), 154–174 (AQFILFTQIASLFPMYVVGYI), 182–202 (IIYMNMISVTLSFILMFGNSM), 233–253 (LNCWLIQGSAWWCGTIILKFL), and 299–319 (LLIYTKTLLLPVVMVITCFIF).

The protein belongs to the dpy-19 family. In terms of tissue distribution, fibroblast, lung, lymphoblast, spleen and testis.

It is found in the membrane. Functionally, probable C-mannosyltransferase that mediates C-mannosylation of tryptophan residues on target proteins. This Homo sapiens (Human) protein is Putative C-mannosyltransferase DPY19L2P2 (DPY19L2P2).